The chain runs to 321 residues: Lipoyl synthase (321 aa).

The [4Fe-4S] cluster site is built by Cys68, Cys73, Cys79, Cys94, Cys98, Cys101, and Ser308. Positions 80–297 (FNHGTATFMI…KAEALAMGFT (218 aa)) constitute a Radical SAM core domain.

Belongs to the radical SAM superfamily. Lipoyl synthase family. It depends on [4Fe-4S] cluster as a cofactor.

The protein resides in the cytoplasm. It catalyses the reaction [[Fe-S] cluster scaffold protein carrying a second [4Fe-4S](2+) cluster] + N(6)-octanoyl-L-lysyl-[protein] + 2 oxidized [2Fe-2S]-[ferredoxin] + 2 S-adenosyl-L-methionine + 4 H(+) = [[Fe-S] cluster scaffold protein] + N(6)-[(R)-dihydrolipoyl]-L-lysyl-[protein] + 4 Fe(3+) + 2 hydrogen sulfide + 2 5'-deoxyadenosine + 2 L-methionine + 2 reduced [2Fe-2S]-[ferredoxin]. It participates in protein modification; protein lipoylation via endogenous pathway; protein N(6)-(lipoyl)lysine from octanoyl-[acyl-carrier-protein]: step 2/2. In terms of biological role, catalyzes the radical-mediated insertion of two sulfur atoms into the C-6 and C-8 positions of the octanoyl moiety bound to the lipoyl domains of lipoate-dependent enzymes, thereby converting the octanoylated domains into lipoylated derivatives. This chain is Lipoyl synthase, found in Escherichia fergusonii (strain ATCC 35469 / DSM 13698 / CCUG 18766 / IAM 14443 / JCM 21226 / LMG 7866 / NBRC 102419 / NCTC 12128 / CDC 0568-73).